The primary structure comprises 217 residues: GTP cyclohydrolase 1 (217 aa).

Zn(2+) is bound by residues cysteine 109, histidine 112, and cysteine 180.

The protein belongs to the GTP cyclohydrolase I family. Homomer.

The enzyme catalyses GTP + H2O = 7,8-dihydroneopterin 3'-triphosphate + formate + H(+). Its pathway is cofactor biosynthesis; 7,8-dihydroneopterin triphosphate biosynthesis; 7,8-dihydroneopterin triphosphate from GTP: step 1/1. This is GTP cyclohydrolase 1 from Aliivibrio salmonicida (strain LFI1238) (Vibrio salmonicida (strain LFI1238)).